The following is a 96-amino-acid chain: Transcription and mRNA export factor SUS1 (96 aa).

A Glycyl lysine isopeptide (Lys-Gly) (interchain with G-Cter in ubiquitin) cross-link involves residue K68.

This sequence belongs to the ENY2 family. Component of the nuclear pore complex (NPC)-associated TREX-2 complex (transcription and export complex 2), composed of at least SUS1, SAC3, THP1, SEM1, and CDC31. TREX-2 contains 2 SUS1 chains. The TREX-2 complex interacts with the nucleoporin NUP1. Component of the 1.8 MDa SAGA transcription coactivator-HAT complex. SAGA is built of 5 distinct domains with specialized functions. Within the SAGA complex, SUS1, SGF11, SGF73 and UBP8 form an additional subcomplex of SAGA called the DUB module (deubiquitination module). Interacts directly with THP1, SAC3, SGF11, and with the RNA polymerase II.

It localises to the nucleus. The protein localises to the nucleoplasm. It is found in the cytoplasm. Its subcellular location is the P-body. Involved in mRNA export coupled transcription activation by association with both the TREX-2 and the SAGA complexes. At the promoters, SAGA is required for recruitment of the basal transcription machinery. It influences RNA polymerase II transcriptional activity through different activities such as TBP interaction and promoter selectivity, interaction with transcription activators, and chromatin modification through histone acetylation and deubiquitination. Within the SAGA complex, participates in a subcomplex required for deubiquitination of H2B and for the maintenance of steady-state H3 methylation levels. The TREX-2 complex functions in docking export-competent ribonucleoprotein particles (mRNPs) to the nuclear entrance of the nuclear pore complex (nuclear basket). TREX-2 participates in mRNA export and accurate chromatin positioning in the nucleus by tethering genes to the nuclear periphery. May also be involved in cytoplasmic mRNA decay by interaction with components of P-bodies. The sequence is that of Transcription and mRNA export factor SUS1 from Saccharomyces cerevisiae (strain YJM789) (Baker's yeast).